We begin with the raw amino-acid sequence, 461 residues long: Coronin-1A (461 aa).

S2 carries the post-translational modification N-acetylserine. Residue S2 is modified to Phosphoserine; by PKC. 7 WD repeats span residues 13-63 (HVFG…LVLP), 73-110 (NAPT…MVWE), 123-160 (PVVT…MVWD), 164-204 (GAAM…RIIE), 207-251 (KGTV…ALWD), 258-296 (PLSL…RYFE), and 302-349 (PFLH…EPIA). Over residues 403–418 (ELRVNRGLDTGRRRAA) the composition is skewed to basic and acidic residues. The interval 403–432 (ELRVNRGLDTGRRRAAPEASGTPSSDAVSR) is disordered. The residue at position 412 (T412) is a Phosphothreonine; by PKC. S422 is subject to Phosphoserine. Positions 424–460 (TPSSDAVSRLEEEMRKLQATVQELQKRLDRLEETVQA) form a coiled coil. At K449 the chain carries N6-acetyllysine.

This sequence belongs to the WD repeat coronin family. As to quaternary structure, binds actin. Post-translationally, phosphorylation at Thr-412 by PKC strongly down-regulates the association with actin. Polyubiquitinated by RNF128 with 'Lys-48'-linked chains, leading to proteasomal degradation. In terms of tissue distribution, expressed in brain, thymus, spleen, bone marrow and lymph node. Low in lung and gut.

Its subcellular location is the cytoplasm. The protein resides in the cytoskeleton. It is found in the cell cortex. It localises to the cytoplasmic vesicle. The protein localises to the phagosome membrane. In terms of biological role, may be a crucial component of the cytoskeleton of highly motile cells, functioning both in the invagination of large pieces of plasma membrane, as well as in forming protrusions of the plasma membrane involved in cell locomotion. In mycobacteria-infected cells, its retention on the phagosomal membrane prevents fusion between phagosomes and lysosomes. The chain is Coronin-1A (CORO1A) from Homo sapiens (Human).